A 250-amino-acid polypeptide reads, in one-letter code: Putative ankyrin repeat protein RBE_0623 (250 aa).

3 ANK repeats span residues 70 to 99, 104 to 134, and 137 to 166; these read IGDS…EPNT, NCYT…NINE, and GKET…PDKF.

The chain is Putative ankyrin repeat protein RBE_0623 from Rickettsia bellii (strain RML369-C).